The sequence spans 986 residues: Ephrin type-A receptor 4 (986 aa).

Residues 1-19 (MAGIFYFALFSCLFGICDA) form the signal peptide. The Extracellular segment spans residues 20–547 (VTGSRVYPAN…RIIGDGANST (528 aa)). An Eph LBD domain is found at 30-209 (EVTLLDSRSV…FYKKCPLTVR (180 aa)). N235, N340, and N408 each carry an N-linked (GlcNAc...) asparagine glycan. 2 Fibronectin type-III domains span residues 328–439 (PPSA…TNQA) and 440–537 (APSS…TVPS). N-linked (GlcNAc...) asparagine glycosylation is present at N545. Residues 548–569 (VLLVSVSGSVVLVVILIAAFVI) traverse the membrane as a helical segment. The Cytoplasmic portion of the chain corresponds to 570 to 986 (SRRRSKYSKA…QQMHGRMVPV (417 aa)). A phosphotyrosine; by autocatalysis mark is found at Y596 and Y602. The 262-residue stretch at 621 to 882 (IKIEKVIGVG…QIVNMLDKLI (262 aa)) folds into the Protein kinase domain. ATP is bound by residues 627–635 (IGVGEFGEV) and K653. Catalysis depends on D746, which acts as the Proton acceptor. Y779 and Y928 each carry phosphotyrosine; by autocatalysis. The SAM domain occupies 911–975 (SAVVSVGDWL…LSSVQAMRTQ (65 aa)). Positions 984–986 (VPV) match the PDZ-binding motif.

The protein belongs to the protein kinase superfamily. Tyr protein kinase family. Ephrin receptor subfamily. Heterotetramer upon binding of the ligand. The heterotetramer is composed of an ephrin dimer and a receptor dimer. Oligomerization is probably required to induce biological responses. Interacts (phosphorylated at position Tyr-602) with FYN. Interacts with CDK5, CDK5R1 and NGEF; upon activation by EFNA1 induces NGEF phosphorylation by the kinase CDK5. Interacts with CHN1; effector of EPHA4 in axon guidance linking EPHA4 activation to RAC1 regulation. Interacts (via PDZ motif) with SIPA1L1 (via PDZ domain); controls neuronal morphology through regulation of the RAP1 (RAP1A or RAP1B) and RAP2 (RAP2A, RAP2B or RAP2C) GTPases. Forms a ternary complex composed of ADAM10, CADH1 and EPHA4; within the complex, CADH1 is cleaved by ADAM10 which disrupts adherens junctions. Ubiquitous.

The protein resides in the cell membrane. Its subcellular location is the cell projection. It localises to the axon. The protein localises to the dendrite. It is found in the postsynaptic density membrane. The protein resides in the early endosome. Its subcellular location is the cell junction. It localises to the adherens junction. The catalysed reaction is L-tyrosyl-[protein] + ATP = O-phospho-L-tyrosyl-[protein] + ADP + H(+). In terms of biological role, receptor tyrosine kinase which binds membrane-bound ephrin family ligands residing on adjacent cells, leading to contact-dependent bidirectional signaling into neighboring cells. The signaling pathway downstream of the receptor is referred to as forward signaling while the signaling pathway downstream of the ephrin ligand is referred to as reverse signaling. Highly promiscuous, it has the unique property among Eph receptors to bind and to be physiologically activated by both GPI-anchored ephrin-A and transmembrane ephrin-B ligands including EFNA1 and EFNB3. Upon activation by ephrin ligands, modulates cell morphology and integrin-dependent cell adhesion through regulation of the Rac, Rap and Rho GTPases activity. Plays an important role in the development of the nervous system controlling different steps of axonal guidance including the establishment of the corticospinal projections. May also control the segregation of motor and sensory axons during neuromuscular circuit development. In addition to its role in axonal guidance plays a role in synaptic plasticity. Activated by EFNA1 phosphorylates CDK5 at 'Tyr-15' which in turn phosphorylates NGEF regulating RHOA and dendritic spine morphogenesis. In the nervous system, also plays a role in repair after injury preventing axonal regeneration and in angiogenesis playing a role in central nervous system vascular formation. Additionally, its promiscuity makes it available to participate in a variety of cell-cell signaling regulating for instance the development of the thymic epithelium. During development of the cochlear organ of Corti, regulates pillar cell separation by forming a ternary complex with ADAM10 and CADH1 which facilitates the cleavage of CADH1 by ADAM10 and disruption of adherens junctions. Phosphorylates CAPRIN1, promoting CAPRIN1-dependent formation of a membraneless compartment. The polypeptide is Ephrin type-A receptor 4 (EPHA4) (Homo sapiens (Human)).